The primary structure comprises 122 residues: Large ribosomal subunit protein uL14 (122 aa).

This sequence belongs to the universal ribosomal protein uL14 family. In terms of assembly, part of the 50S ribosomal subunit. Forms a cluster with proteins L3 and L19. In the 70S ribosome, L14 and L19 interact and together make contacts with the 16S rRNA in bridges B5 and B8.

Functionally, binds to 23S rRNA. Forms part of two intersubunit bridges in the 70S ribosome. The sequence is that of Large ribosomal subunit protein uL14 from Bartonella bacilliformis (strain ATCC 35685 / KC583 / Herrer 020/F12,63).